We begin with the raw amino-acid sequence, 104 residues long: UPF0213 protein YsiG (104 aa).

In terms of domain architecture, GIY-YIG spans 2–79 (NQYFTYILQC…KLVRKQKLSL (78 aa)).

It belongs to the UPF0213 family.

This chain is UPF0213 protein YsiG (ysiG), found in Lactococcus lactis subsp. lactis (strain IL1403) (Streptococcus lactis).